The sequence spans 37 residues: Toxin Bcg III 28.78 (37 aa).

Cys6 and Cys31 are oxidised to a cystine.

The protein resides in the secreted. The protein localises to the nematocyst. This is Toxin Bcg III 28.78 from Bunodosoma cangicum (Sea anemone).